A 346-amino-acid polypeptide reads, in one-letter code: Sulfate/thiosulfate import ATP-binding protein CysA 1 (346 aa).

One can recognise an ABC transporter domain in the interval 3–237 (VKVSGITKQF…PNSPFVFSFI (235 aa)). Position 35–42 (35–42 (GPSGSGKT)) interacts with ATP.

This sequence belongs to the ABC transporter superfamily. Sulfate/tungstate importer (TC 3.A.1.6) family. In terms of assembly, the complex is composed of two ATP-binding proteins (CysA), two transmembrane proteins (CysT and CysW) and a solute-binding protein (CysP).

The protein localises to the cell inner membrane. It catalyses the reaction sulfate(out) + ATP + H2O = sulfate(in) + ADP + phosphate + H(+). The catalysed reaction is thiosulfate(out) + ATP + H2O = thiosulfate(in) + ADP + phosphate + H(+). Part of the ABC transporter complex CysAWTP involved in sulfate/thiosulfate import. Responsible for energy coupling to the transport system. The protein is Sulfate/thiosulfate import ATP-binding protein CysA 1 of Agrobacterium fabrum (strain C58 / ATCC 33970) (Agrobacterium tumefaciens (strain C58)).